Consider the following 292-residue polypeptide: 4-hydroxy-tetrahydrodipicolinate synthase (292 aa).

T45 lines the pyruvate pocket. The active-site Proton donor/acceptor is the Y133. The Schiff-base intermediate with substrate role is filled by K161. I203 is a pyruvate binding site.

This sequence belongs to the DapA family. Homodimer.

It is found in the cytoplasm. It carries out the reaction L-aspartate 4-semialdehyde + pyruvate = (2S,4S)-4-hydroxy-2,3,4,5-tetrahydrodipicolinate + H2O + H(+). Its pathway is amino-acid biosynthesis; L-lysine biosynthesis via DAP pathway; (S)-tetrahydrodipicolinate from L-aspartate: step 3/4. Functionally, catalyzes the condensation of (S)-aspartate-beta-semialdehyde [(S)-ASA] and pyruvate to 4-hydroxy-tetrahydrodipicolinate (HTPA). The protein is 4-hydroxy-tetrahydrodipicolinate synthase of Pseudomonas putida (strain W619).